Here is a 285-residue protein sequence, read N- to C-terminus: Polyamine aminopropyltransferase (285 aa).

The PABS domain occupies 2–237 (EFWFSELHSP…GYWLFGFASK (236 aa)). Q31 contacts S-methyl-5'-thioadenosine. D86 provides a ligand contact to spermidine. Residues E106 and 137–138 (DA) contribute to the S-methyl-5'-thioadenosine site. D155 serves as the catalytic Proton acceptor.

This sequence belongs to the spermidine/spermine synthase family. In terms of assembly, homodimer or homotetramer.

It is found in the cytoplasm. It catalyses the reaction S-adenosyl 3-(methylsulfanyl)propylamine + putrescine = S-methyl-5'-thioadenosine + spermidine + H(+). It participates in amine and polyamine biosynthesis; spermidine biosynthesis; spermidine from putrescine: step 1/1. Functionally, catalyzes the irreversible transfer of a propylamine group from the amino donor S-adenosylmethioninamine (decarboxy-AdoMet) to putrescine (1,4-diaminobutane) to yield spermidine. This chain is Polyamine aminopropyltransferase, found in Lachnospira eligens (strain ATCC 27750 / DSM 3376 / VPI C15-48 / C15-B4) (Eubacterium eligens).